The following is a 131-amino-acid chain: Large-conductance mechanosensitive channel (131 aa).

Helical transmembrane passes span 8 to 28, 30 to 50, and 67 to 87; these read FAIR…GAFG, IVSS…LGGI, and GAFI…FLFV.

This sequence belongs to the MscL family. In terms of assembly, homopentamer.

It is found in the cell membrane. In terms of biological role, channel that opens in response to stretch forces in the membrane lipid bilayer. May participate in the regulation of osmotic pressure changes within the cell. The polypeptide is Large-conductance mechanosensitive channel (Geobacillus thermodenitrificans (strain NG80-2)).